The primary structure comprises 519 residues: Membrane-bound transcription factor site-2 protease (519 aa).

Residues methionine 1–proline 3 are Cytoplasmic-facing. Residues valine 4–leucine 24 form a helical membrane-spanning segment. At lysine 25 to glutamine 74 the chain is on the lumenal side. A run of 2 helical transmembrane segments spans residues tryptophan 75–glycine 95 and lysine 96–alanine 107. Residues aspartate 108–glutamine 144 lie on the Lumenal side of the membrane. The interval serine 115–serine 135 is disordered. Residues valine 145–valine 169 traverse the membrane as a helical segment. Histidine 171 contributes to the Zn(2+) binding site. Glutamate 172 is a catalytic residue. Transmembrane regions (helical) follow at residues glycine 174–phenylalanine 186, asparagine 187–leucine 209, and phenylalanine 229–tyrosine 251. A Zn(2+)-binding site is contributed by histidine 175. Residues threonine 252–lysine 446 lie on the Lumenal side of the membrane. Residue asparagine 337 is glycosylated (N-linked (GlcNAc...) asparagine). 2 helical membrane passes run tyrosine 447–phenylalanine 464 and alanine 465–leucine 476. The Lumenal portion of the chain corresponds to aspartate 477–leucine 492. The helical transmembrane segment at isoleucine 493–leucine 513 threads the bilayer. The Cytoplasmic segment spans residues tryptophan 514–arginine 519.

The protein belongs to the peptidase M50A family. The cofactor is Zn(2+). Expressed in heart, brain, placenta, lung, liver, muscle, kidney and pancreas.

It is found in the membrane. The protein localises to the cytoplasm. It localises to the golgi apparatus membrane. It catalyses the reaction Cleaves several transcription factors that are type-2 transmembrane proteins within membrane-spanning domains. Known substrates include sterol regulatory element-binding protein (SREBP) -1, SREBP-2 and forms of the transcriptional activator ATF6. SREBP-2 is cleaved at the site 477-DRSRILL-|-CVLTFLCLSFNPLTSLLQWGGA-505. The residues Asn-Pro, 11 residues distal to the site of cleavage in the membrane-spanning domain, are important for cleavage by S2P endopeptidase. Replacement of either of these residues does not prevent cleavage, but there is no cleavage if both of these residues are replaced.. Zinc metalloprotease that mediates intramembrane proteolysis of proteins such as ATF6, ATF6B, SREBF1/SREBP1 and SREBF2/SREBP2. Catalyzes the second step in the proteolytic activation of the sterol regulatory element-binding proteins (SREBPs) SREBF1/SREBP1 and SREBF2/SREBP2: cleaves SREBPs within the first transmembrane segment, thereby releasing the N-terminal segment with a portion of the transmembrane segment attached. Mature N-terminal SREBP fragments shuttle to the nucleus and activate gene transcription. Also mediates the second step in the proteolytic activation of the cyclic AMP-dependent transcription factor ATF-6 (ATF6 and ATF6B). Involved in intramembrane proteolysis during bone formation. In astrocytes and osteoblasts, upon DNA damage and ER stress, mediates the second step of the regulated intramembrane proteolytic activation of the transcription factor CREB3L1, leading to the inhibition of cell-cycle progression. The polypeptide is Membrane-bound transcription factor site-2 protease (Homo sapiens (Human)).